We begin with the raw amino-acid sequence, 746 residues long: H(+)/Cl(-) exchange transporter 5 (746 aa).

The Cytoplasmic segment spans residues 1 to 54 (MDFLEEPIPGVGTYDDFNTIDWVREKSRDRDRHREITNRSKESTWALIHSVSDA). A run of 2 helical transmembrane segments spans residues 55-92 (FSGW…ICTE) and 138-161 (VNYF…VKVF). The short motif at 167-171 (GSGIP) is the Selectivity filter part_1 element. Ser-168 is a chloride binding site. The helical intramembrane region spans 170-177 (IPEIKTIL). The next 2 helical transmembrane spans lie at 186–205 (LGKW…VSSG) and 211–230 (EGPL…HCFN). The Selectivity filter part_2 motif lies at 209–213 (GKEGP). 2 intramembrane regions (helical) span residues 242–254 (VLSA…VSVA) and 258–266 (PIGGVLFSL). The next 5 membrane-spanning stretches (helical) occupy residues 278–296 (LWRS…RSIN), 319–344 (LVPF…IAWC), 352–372 (LGKY…ILAF), 428–448 (MWQL…TFGM), and 453–472 (GLFI…LGVG). The short motif at 453–457 (GLFIP) is the Selectivity filter part_3 element. Residue Phe-455 participates in chloride binding. Residues 500–514 (GLYAMVGAAACLGGV) constitute an intramembrane region (helical). Positions 515-517 (TRM) form an intramembrane region, note=Loop between two helices. The segment at residues 518–529 (TVSLVVIMFELT) is an intramembrane region (helical). The note=Loop between two helices intramembrane region spans 530-534 (GGLEY). A helical membrane pass occupies residues 535-552 (IVPLMAAAMTSKWVADAL). Topologically, residues 553–746 (GREGIYDAHI…NQDPDSILFN (194 aa)) are cytoplasmic. Position 558 (Tyr-558) interacts with chloride. CBS domains are found at residues 586–650 (MKPR…ARKE) and 682–742 (ILDL…DPDS). Residues Thr-596, 617 to 619 (YSG), and 724 to 727 (TKKD) each bind ATP.

The protein belongs to the chloride channel (TC 2.A.49) family. ClC-5/CLCN5 subfamily. In terms of assembly, interacts with NEDD4 and NEDD4L. In terms of processing, ubiquitinated by NEDD4L in the presence of albumin; which promotes endocytosis and proteasomal degradation. In terms of tissue distribution, detected in duodenum, jejunum and ileum. Detected in crypt and villus regions of the epithelium of the small intestine.

It is found in the golgi apparatus membrane. Its subcellular location is the endosome membrane. The protein resides in the cell membrane. The enzyme catalyses 2 chloride(in) + H(+)(out) = 2 chloride(out) + H(+)(in). Proton-coupled chloride transporter. Functions as antiport system and exchanges chloride ions against protons. Important for normal acidification of the endosome lumen. May play an important role in renal tubular function. The CLC channel family contains both chloride channels and proton-coupled anion transporters that exchange chloride or another anion for protons. The absence of conserved gating glutamate residues is typical for family members that function as channels. The protein is H(+)/Cl(-) exchange transporter 5 (CLCN5) of Cavia porcellus (Guinea pig).